Reading from the N-terminus, the 720-residue chain is Methionine--tRNA ligase (720 aa).

Positions 27 to 37 match the 'HIGH' region motif; the sequence is PYANGQIHIGH. Cys-158, Cys-161, Cys-171, and Cys-174 together coordinate Zn(2+). Residues 348-352 carry the 'KMSKS' region motif; the sequence is KMSKS. Lys-351 contributes to the ATP binding site. A tRNA-binding domain is found at 614-720; the sequence is DFAKVDLRIA…SGAKPGMRVK (107 aa).

This sequence belongs to the class-I aminoacyl-tRNA synthetase family. MetG type 1 subfamily. In terms of assembly, homodimer. Requires Zn(2+) as cofactor.

The protein localises to the cytoplasm. The enzyme catalyses tRNA(Met) + L-methionine + ATP = L-methionyl-tRNA(Met) + AMP + diphosphate. Functionally, is required not only for elongation of protein synthesis but also for the initiation of all mRNA translation through initiator tRNA(fMet) aminoacylation. This is Methionine--tRNA ligase from Burkholderia ambifaria (strain ATCC BAA-244 / DSM 16087 / CCUG 44356 / LMG 19182 / AMMD) (Burkholderia cepacia (strain AMMD)).